Consider the following 217-residue polypeptide: Elongation factor Ts (217 aa).

An involved in Mg(2+) ion dislocation from EF-Tu region spans residues 82–85; it reads TDFV.

The protein belongs to the EF-Ts family.

The protein resides in the cytoplasm. In terms of biological role, associates with the EF-Tu.GDP complex and induces the exchange of GDP to GTP. It remains bound to the aminoacyl-tRNA.EF-Tu.GTP complex up to the GTP hydrolysis stage on the ribosome. The polypeptide is Elongation factor Ts (Desulfitobacterium hafniense (strain DSM 10664 / DCB-2)).